Reading from the N-terminus, the 375-residue chain is MQCALYDAGRCRSCQWITQPIPEQLSAKTADLKNLLADFPVEEWCAPVSGPEQGFRNKAKMVVSGSVEKPLLGMLHRDGTPEDLCDCPLYPASFAPVFAALKPFIARAGLTPYNVARKRGELKYILLTESQSDGGMMLRFVLRSETKLAQLRKALPWLQEQLPQLKVITVNIQPVHMAIMEGETEIYLTEQQALAERFNDVPLWIRPQSFFQTNPAVASQLYATARDWVRQLPVKHMWDLFCGVGGFGLHCATPDMQLTGIEIAPEAIACAKQSAAELGLTRLQFQALDSTQFATAQGEVPELVLVNPPRRGIGKPLCDYLSTMAPRFIIYSSCNAQTMAKDIRELPGFRIERVQLFDMFPHTAHYEVLTLLVKQ.

Positions 3, 11, 14, and 87 each coordinate [4Fe-4S] cluster. Residues Gln212, Phe241, Glu262, and Asn307 each contribute to the S-adenosyl-L-methionine site. The Nucleophile role is filled by Cys334.

Belongs to the class I-like SAM-binding methyltransferase superfamily. RNA M5U methyltransferase family. RlmC subfamily.

It catalyses the reaction uridine(747) in 23S rRNA + S-adenosyl-L-methionine = 5-methyluridine(747) in 23S rRNA + S-adenosyl-L-homocysteine + H(+). In terms of biological role, catalyzes the formation of 5-methyl-uridine at position 747 (m5U747) in 23S rRNA. In Shigella boydii serotype 4 (strain Sb227), this protein is 23S rRNA (uracil(747)-C(5))-methyltransferase RlmC.